The primary structure comprises 472 residues: Ras-GEF domain-containing family member 1B (472 aa).

An N-terminal Ras-GEF domain is found at 34 to 164 (HDNNLLSGSL…MIQCLIRKLA (131 aa)). One can recognise a Ras-GEF domain in the interval 204 to 452 (DPYTLAQQLT…YLASYESEGP (249 aa)).

In terms of assembly, interacts with CCDC124 during cytokinesis. Interacts with Ras family proteins.

The protein resides in the early endosome. It localises to the late endosome. Its subcellular location is the midbody. Guanine nucleotide exchange factor (GEF) with specificity for RAP2A, it doesn't seems to activate other Ras family proteins (in vitro). This is Ras-GEF domain-containing family member 1B (RASGEF1B) from Bos taurus (Bovine).